Reading from the N-terminus, the 180-residue chain is Crossover junction endodeoxyribonuclease RuvC (180 aa).

Residues Asp7, Glu66, and Asp138 contribute to the active site. Residues Asp7, Glu66, and Asp138 each coordinate Mg(2+).

The protein belongs to the RuvC family. In terms of assembly, homodimer which binds Holliday junction (HJ) DNA. The HJ becomes 2-fold symmetrical on binding to RuvC with unstacked arms; it has a different conformation from HJ DNA in complex with RuvA. In the full resolvosome a probable DNA-RuvA(4)-RuvB(12)-RuvC(2) complex forms which resolves the HJ. Mg(2+) serves as cofactor.

It is found in the cytoplasm. The enzyme catalyses Endonucleolytic cleavage at a junction such as a reciprocal single-stranded crossover between two homologous DNA duplexes (Holliday junction).. Its function is as follows. The RuvA-RuvB-RuvC complex processes Holliday junction (HJ) DNA during genetic recombination and DNA repair. Endonuclease that resolves HJ intermediates. Cleaves cruciform DNA by making single-stranded nicks across the HJ at symmetrical positions within the homologous arms, yielding a 5'-phosphate and a 3'-hydroxyl group; requires a central core of homology in the junction. The consensus cleavage sequence is 5'-(A/T)TT(C/G)-3'. Cleavage occurs on the 3'-side of the TT dinucleotide at the point of strand exchange. HJ branch migration catalyzed by RuvA-RuvB allows RuvC to scan DNA until it finds its consensus sequence, where it cleaves and resolves the cruciform DNA. The protein is Crossover junction endodeoxyribonuclease RuvC of Paraburkholderia phymatum (strain DSM 17167 / CIP 108236 / LMG 21445 / STM815) (Burkholderia phymatum).